The sequence spans 93 residues: RNA-binding protein Hfq (93 aa).

Positions 9–68 (DPYLNALRRERIPVSIYLVNGIKLQGQIESFDQFVILLKNTVSQMVYKHAISTVVPARAI) constitute a Sm domain. Positions 70–81 (HNNNSNHAHQAA) are enriched in low complexity. A disordered region spans residues 70 to 93 (HNNNSNHAHQAAPVQSAEVVEKVE).

The protein belongs to the Hfq family. In terms of assembly, homohexamer.

In terms of biological role, RNA chaperone that binds small regulatory RNA (sRNAs) and mRNAs to facilitate mRNA translational regulation in response to envelope stress, environmental stress and changes in metabolite concentrations. Also binds with high specificity to tRNAs. This chain is RNA-binding protein Hfq, found in Glaesserella parasuis serovar 5 (strain SH0165) (Haemophilus parasuis).